The sequence spans 226 residues: Orotidine 5'-phosphate decarboxylase (226 aa).

Substrate contacts are provided by residues Asp-8, Lys-30, Asp-58–Thr-67, Thr-117, Arg-177, Gln-186, Gly-206, and Arg-207. Catalysis depends on Lys-60, which acts as the Proton donor.

Belongs to the OMP decarboxylase family. Type 1 subfamily. In terms of assembly, homodimer.

It catalyses the reaction orotidine 5'-phosphate + H(+) = UMP + CO2. It functions in the pathway pyrimidine metabolism; UMP biosynthesis via de novo pathway; UMP from orotate: step 2/2. In terms of biological role, catalyzes the decarboxylation of orotidine 5'-monophosphate (OMP) to uridine 5'-monophosphate (UMP). This is Orotidine 5'-phosphate decarboxylase from Campylobacter jejuni subsp. doylei (strain ATCC BAA-1458 / RM4099 / 269.97).